The sequence spans 698 residues: Polyribonucleotide nucleotidyltransferase (698 aa).

Residues D487 and D493 each contribute to the Mg(2+) site. A KH domain is found at 555–614 (PKIIQIQIDPQKIGDVVGQRGKTINAIIEQTGVKIDINDEGAVSVCGTDKDMMDKAINMI). The 69-residue stretch at 624–692 (GQVFEGKVIS…KMGRISFSIK (69 aa)) folds into the S1 motif domain.

Belongs to the polyribonucleotide nucleotidyltransferase family. Mg(2+) serves as cofactor.

Its subcellular location is the cytoplasm. It catalyses the reaction RNA(n+1) + phosphate = RNA(n) + a ribonucleoside 5'-diphosphate. Involved in mRNA degradation. Catalyzes the phosphorolysis of single-stranded polyribonucleotides processively in the 3'- to 5'-direction. The polypeptide is Polyribonucleotide nucleotidyltransferase (Lachnoclostridium phytofermentans (strain ATCC 700394 / DSM 18823 / ISDg) (Clostridium phytofermentans)).